The sequence spans 131 residues: Small ribosomal subunit protein uS12 (131 aa).

A disordered region spans residues 1 to 22 (MPTTQQLLRKGRKVLQKKSKVP). Over residues 9 to 20 (RKGRKVLQKKSK) the composition is skewed to basic residues. Asp89 carries the 3-methylthioaspartic acid modification. Residues 102–131 (LDTQGVKDRNKSRSKYGTKKPKAGAAAAKK) are disordered. Residues 113–131 (SRSKYGTKKPKAGAAAAKK) are compositionally biased toward basic residues.

It belongs to the universal ribosomal protein uS12 family. As to quaternary structure, part of the 30S ribosomal subunit. Contacts proteins S8 and S17. May interact with IF1 in the 30S initiation complex.

Functionally, with S4 and S5 plays an important role in translational accuracy. In terms of biological role, interacts with and stabilizes bases of the 16S rRNA that are involved in tRNA selection in the A site and with the mRNA backbone. Located at the interface of the 30S and 50S subunits, it traverses the body of the 30S subunit contacting proteins on the other side and probably holding the rRNA structure together. The combined cluster of proteins S8, S12 and S17 appears to hold together the shoulder and platform of the 30S subunit. This is Small ribosomal subunit protein uS12 from Deinococcus radiodurans (strain ATCC 13939 / DSM 20539 / JCM 16871 / CCUG 27074 / LMG 4051 / NBRC 15346 / NCIMB 9279 / VKM B-1422 / R1).